We begin with the raw amino-acid sequence, 297 residues long: Cytosolic Fe-S cluster assembly factor CFD1 (297 aa).

15 to 22 (GKGGVGKS) is a binding site for ATP. Residues C216 and C219 each contribute to the [4Fe-4S] cluster site.

It belongs to the Mrp/NBP35 ATP-binding proteins family. NUBP2/CFD1 subfamily. In terms of assembly, heterotetramer of 2 NBP35 and 2 CFD1 chains. It depends on [4Fe-4S] cluster as a cofactor.

Its subcellular location is the cytoplasm. In terms of biological role, component of the cytosolic iron-sulfur (Fe/S) protein assembly (CIA) machinery. Required for maturation of extramitochondrial Fe-S proteins. The NBP35-CFD1 heterotetramer forms a Fe-S scaffold complex, mediating the de novo assembly of an Fe-S cluster and its transfer to target apoproteins. The sequence is that of Cytosolic Fe-S cluster assembly factor CFD1 from Phaeosphaeria nodorum (strain SN15 / ATCC MYA-4574 / FGSC 10173) (Glume blotch fungus).